The chain runs to 325 residues: D site-binding protein (325 aa).

Disordered regions lie at residues 1-100 (MARP…PGLL), 124-198 (LEHG…DPDT), and 212-255 (LALS…EQKD). Gly residues predominate over residues 17–28 (GPTGAPPGGGAL). Composition is skewed to low complexity over residues 29–38 (LGLRSLLQGT) and 71–80 (AGPADASAGA). Serine 86 carries the phosphoserine modification. Low complexity predominate over residues 88–100 (RGRPGAAPGPGLL). Positions 129 to 153 (PPSPPPPGGPSPAPSPVRTPAPSPR) are enriched in pro residues. Over residues 166 to 176 (PGHAPARAALG) the composition is skewed to low complexity. Basic and acidic residues predominate over residues 221 to 236 (ETFDPRRHRFSEEELK). The region spanning 255-318 (DEKYWSRRYK…SHYRAVLSRY (64 aa)) is the bZIP domain. Positions 257-279 (KYWSRRYKNNEAAKRSRDARRLK) are basic motif. A leucine-zipper region spans residues 283 to 297 (ISVRAAFLEKENALL).

This sequence belongs to the bZIP family. PAR subfamily. In terms of assembly, binds DNA as a homodimer or a heterodimer. Can form a heterodimer with TEF.

Its subcellular location is the nucleus. Its function is as follows. This transcriptional activator recognizes and binds to the sequence 5'-RTTAYGTAAY-3' found in the promoter of genes such as albumin, CYP2A4 and CYP2A5. It is not essential for circadian rhythm generation, but modulates important clock output genes. May be a direct target for regulation by the circadian pacemaker component clock. May affect circadian period and sleep regulation. This is D site-binding protein (DBP) from Bos taurus (Bovine).